Reading from the N-terminus, the 842-residue chain is MDIRKAYLDFFASKGHEITPSSPLVPDDATLLFTNAGMVPFKSIFTGEIPRPNPPRKTSCQTCIRAGGKHNDLDNVGYTARHHTFFEMLGNFSFGDYFKEQAIAYAWEFVTEFLKLPKDRLYVTVHENDDEAFNLWQKHIQKERIYKFGDKDNFWQMGDTGPCGPCSEIFYDQGEEHFNSSEDYMGGDGDRFLEIWNLVFMQYERSADGVLSPLPKPSIDTGMGLERVTAIKEGKFSNFDSSLFMPIINEISKLCNKTYIYESGASFRVIADHIRSSVFLLAQGVSFDKEGRGYVLRRILRRALRHGYLLGFKQAFMYKLVDVVCDLMGGHYTYLNEKKDFIKEQIRLEEERFLSTIENGIEIFNEELKNTKEIFSGEVAFKLYDTYGFPLDLTADMLREKNLKVDEEKFELLMNEQKARAKASWKGSGDKTASGDFKNLLEKFGENHFVGYEKAECESKILALLDEDFKEVSTLKDAGWVMLKNTPFYATSGGQSADSGFMAKREVLDTQKFFNLNLSFVKAGEELKVGDIVHARIDTEKREQIARHHSATHLLHHALREILGSHVSQAGSLVESNKLRFDFTHHKALSKEELENIEKRVNEMIINSSEAILENMPLEEAKKSGAIALFNEKYQGNVRVLTLGESKELCGGTHVKNTAQIGSFYIVKESGVSAGVRRIEAVVSKAALEFVKNQLEELSKVKDELKNNDILSGIKKLKNEILSLKNELKNSSKTELDSKNIQGVEICVKRIDNGDIKAMIDDFKNKFAKAVILLIQVKDEKITLAAGVKDVPLKAGALVKEAAQILGGNGGGRDDFATAGGKDLSKINEALKQSLETIEKAL.

Zn(2+) contacts are provided by His-549, His-553, Cys-650, and His-654.

The protein belongs to the class-II aminoacyl-tRNA synthetase family. Zn(2+) is required as a cofactor.

It localises to the cytoplasm. The catalysed reaction is tRNA(Ala) + L-alanine + ATP = L-alanyl-tRNA(Ala) + AMP + diphosphate. In terms of biological role, catalyzes the attachment of alanine to tRNA(Ala) in a two-step reaction: alanine is first activated by ATP to form Ala-AMP and then transferred to the acceptor end of tRNA(Ala). Also edits incorrectly charged Ser-tRNA(Ala) and Gly-tRNA(Ala) via its editing domain. This Campylobacter jejuni subsp. jejuni serotype O:6 (strain 81116 / NCTC 11828) protein is Alanine--tRNA ligase.